Here is a 33-residue protein sequence, read N- to C-terminus: Photosystem II reaction center protein Psb30 (33 aa).

Residues Leu-5–Leu-25 form a helical membrane-spanning segment.

Belongs to the Psb30/Ycf12 family. In terms of assembly, PSII is composed of 1 copy each of membrane proteins PsbA, PsbB, PsbC, PsbD, PsbE, PsbF, PsbH, PsbI, PsbJ, PsbK, PsbL, PsbM, PsbT, PsbX, PsbY, PsbZ, Psb30/Ycf12, peripheral proteins of the oxygen-evolving complex and a large number of cofactors. It forms dimeric complexes.

Its subcellular location is the plastid. The protein resides in the chloroplast thylakoid membrane. Its function is as follows. A core subunit of photosystem II (PSII), probably helps stabilize the reaction center. This is Photosystem II reaction center protein Psb30 from Lepocinclis buetschlii.